Reading from the N-terminus, the 916-residue chain is Dual serine/threonine and tyrosine protein kinase (916 aa).

Residues 1–19 are compositionally biased toward basic and acidic residues; it reads MQRDGTRSARRMDEGDRRT. A disordered region spans residues 1–27; that stretch reads MQRDGTRSARRMDEGDRRTGSAGRSGS. One can recognise a Protein kinase domain in the interval 641 to 895; that stretch reads PRIGRELGRG…PLMGIVQPML (255 aa). ATP is bound by residues 647–655 and lysine 670; that span reads LGRGQYGVV. Aspartate 766 acts as the Proton acceptor in catalysis.

Belongs to the protein kinase superfamily. Ser/Thr protein kinase family.

The protein localises to the cytoplasm. Its subcellular location is the cell membrane. The protein resides in the apical cell membrane. It localises to the basolateral cell membrane. It is found in the cell junction. It catalyses the reaction L-seryl-[protein] + ATP = O-phospho-L-seryl-[protein] + ADP + H(+). It carries out the reaction L-threonyl-[protein] + ATP = O-phospho-L-threonyl-[protein] + ADP + H(+). The catalysed reaction is L-tyrosyl-[protein] + ATP = O-phospho-L-tyrosyl-[protein] + ADP + H(+). In terms of biological role, may act as a positive regulator of ERK phosphorylation downstream of fibroblast growth factor-receptor activation. May induce both caspase-dependent apoptosis and caspase-independent cell death. May play a role in the embryonic development. The protein is Dual serine/threonine and tyrosine protein kinase (dstyk) of Xenopus laevis (African clawed frog).